Consider the following 1412-residue polypeptide: DNA-directed RNA polymerase subunit beta' (1412 aa).

Zn(2+) is bound by residues Cys-70, Cys-72, Cys-85, and Cys-88. The Mg(2+) site is built by Asp-458, Asp-460, and Asp-462. Residues Cys-813, Cys-887, Cys-894, and Cys-897 each coordinate Zn(2+). The disordered stretch occupies residues 1388–1412; sequence EQALLTPATTAEAVVGEEPAPPPAQ. The span at 1393-1405 shows a compositional bias: low complexity; that stretch reads TPATTAEAVVGEE.

Belongs to the RNA polymerase beta' chain family. As to quaternary structure, the RNAP catalytic core consists of 2 alpha, 1 beta, 1 beta' and 1 omega subunit. When a sigma factor is associated with the core the holoenzyme is formed, which can initiate transcription. Mg(2+) serves as cofactor. The cofactor is Zn(2+).

It carries out the reaction RNA(n) + a ribonucleoside 5'-triphosphate = RNA(n+1) + diphosphate. DNA-dependent RNA polymerase catalyzes the transcription of DNA into RNA using the four ribonucleoside triphosphates as substrates. The protein is DNA-directed RNA polymerase subunit beta' of Methylibium petroleiphilum (strain ATCC BAA-1232 / LMG 22953 / PM1).